The chain runs to 3086 residues: Genome polyprotein (3086 aa).

The Peptidase S30 domain occupies 122-256 (RRSKILACDL…RAGIHTIKHY (135 aa)). Catalysis depends on for P1 proteinase activity residues H173, D182, and S215. Residues 590–711 (YYVAPEGYCY…TGEMLDYNVG (122 aa)) form the Peptidase C6 domain. Catalysis depends on for helper component proteinase activity residues C598 and H670. The Helicase ATP-binding domain occupies 1189-1341 (ISSDTANAEF…PMFPVRVSEA (153 aa)). 1202 to 1209 (GGVGTGKS) is an ATP binding site. Positions 1291 to 1294 (DECH) match the DEAH box motif. O-(5'-phospho-RNA)-tyrosine is present on Y1870. Positions 1970–1990 (HDGELRQSRPSRPIQKDQVPA) are disordered. Positions 2000-2217 (SKSIAKGLRD…VNYGTMDLTS (218 aa)) constitute a Peptidase C4 domain. Residues H2045, D2080, and C2149 each act as for nuclear inclusion protein A activity in the active site. Positions 2482–2606 (WDYFDADGSR…AVEPSLSDKI (125 aa)) constitute a RdRp catalytic domain. The span at 2762 to 2821 (TAASSAATQTSTTSPTVTSTSGASTSTSSGTTSAPLASTTPPVSATTTPSTGTTAPTTPT) shows a compositional bias: low complexity. Residues 2762–2822 (TAASSAATQT…GTTAPTTPTV (61 aa)) are disordered. T3069 is modified (phosphothreonine).

The protein belongs to the potyviridae genome polyprotein family. In terms of processing, VPg is uridylylated by the polymerase and is covalently attached to the 5'-end of the genomic RNA. This uridylylated form acts as a nucleotide-peptide primer for the polymerase. Post-translationally, genome polyprotein of potyviruses undergoes post-translational proteolytic processing by the main proteinase NIa-pro resulting in the production of at least ten individual proteins. The P1 proteinase and the HC-pro cleave only their respective C-termini autocatalytically. 6K1 is essential for proper proteolytic separation of P3 from CI.

It is found in the host cytoplasmic vesicle membrane. The protein localises to the host cytoplasmic vesicle. Its subcellular location is the virion. It catalyses the reaction RNA(n) + a ribonucleoside 5'-triphosphate = RNA(n+1) + diphosphate. The catalysed reaction is Hydrolyzes glutaminyl bonds, and activity is further restricted by preferences for the amino acids in P6 - P1' that vary with the species of potyvirus, e.g. Glu-Xaa-Xaa-Tyr-Xaa-Gln-|-(Ser or Gly) for the enzyme from tobacco etch virus. The natural substrate is the viral polyprotein, but other proteins and oligopeptides containing the appropriate consensus sequence are also cleaved.. It carries out the reaction Hydrolyzes a Gly-|-Gly bond at its own C-terminus, commonly in the sequence -Tyr-Xaa-Val-Gly-|-Gly, in the processing of the potyviral polyprotein.. In terms of biological role, required for aphid transmission and also has proteolytic activity. Only cleaves a Gly-Gly dipeptide at its own C-terminus. Interacts with virions and aphid stylets. Acts as a suppressor of RNA-mediated gene silencing, also known as post-transcriptional gene silencing (PTGS), a mechanism of plant viral defense that limits the accumulation of viral RNAs. May have RNA-binding activity. Its function is as follows. Has helicase activity. It may be involved in replication. Indispensable for virus replication. Reduces the abundance of host transcripts related to jasmonic acid biosynthesis therefore altering the host defenses. In order to increase its own stability, decreases host protein degradation pathways. Functionally, indispensable for virus replication. In terms of biological role, mediates the cap-independent, EIF4E-dependent translation of viral genomic RNAs. Binds to the cap-binding site of host EIF4E and thus interferes with the host EIF4E-dependent mRNA export and translation. VPg-RNA directly binds EIF4E and is a template for transcription. Also forms trimeric complexes with EIF4E-EIF4G, which are templates for translation. Its function is as follows. Has RNA-binding and proteolytic activities. An RNA-dependent RNA polymerase that plays an essential role in the virus replication. Functionally, involved in aphid transmission, cell-to-cell and systemis movement, encapsidation of the viral RNA and in the regulation of viral RNA amplification. The polypeptide is Genome polyprotein (Dactylis glomerata (Orchard grass)).